A 318-amino-acid chain; its full sequence is Serpentine receptor class delta-25 (318 aa).

Helical transmembrane passes span 5 to 25 (LLHS…MYLA), 38 to 58 (VVIT…FFVM), 88 to 108 (HMFM…SYLF), 126 to 146 (IAFY…SIYI), 176 to 196 (ITLL…YTFI), 226 to 246 (TFKL…VAMF), and 258 to 278 (IVSV…IIFV).

It belongs to the nematode receptor-like protein srd family.

The protein localises to the membrane. The chain is Serpentine receptor class delta-25 (srd-25) from Caenorhabditis elegans.